We begin with the raw amino-acid sequence, 2346 residues long: Myomegalin (2346 aa).

Coiled-coil stretches lie at residues 41-132, 162-205, 238-318, and 350-684; these read REDI…LVEA, DQYT…LLEE, DSHL…REML, and CSQL…RQYL. At glutamate 252 the chain carries Phosphoserine. The tract at residues 698-732 is disordered; the sequence is NQQAEVTPTGRLGKQTDQGSMQIPSRDDSTSLTAK. Phosphothreonine is present on threonine 704. Positions 722–732 are enriched in basic and acidic residues; that stretch reads SRDDSTSLTAK. Coiled-coil stretches lie at residues 743 to 936, 1002 to 1043, 1096 to 1124, 1212 to 1240, 1346 to 1385, and 1431 to 1455; these read GDLD…TLAA, LQEE…SSVS, SSLQAEFRKLQGKLKNAHNIINLLKEQLV, STQHLRSQLSQCKQRYQDLQEKLLLSEAT, GKSENILVLRKDIKDLKAQLQNANKVIQNLKSRVRSLSVT, and GLQAKKDLESLIQRVSQLEAQLPKN. A disordered region spans residues 1193 to 1214; it reads DNQSQPRDPGPQSAFSLPGSTQ. The segment covering 1205-1214 has biased composition (polar residues); it reads SAFSLPGSTQ. The Olduvai domain maps to 1551 to 1642; that stretch reads KDHKSEKDQA…EEKKASPSHS (92 aa). Residues 1591 to 1600 are compositionally biased toward low complexity; it reads SLTPSSSHAL. Disordered stretches follow at residues 1591 to 1614 and 1633 to 1690; these read SLTPSSSHALSDSHRSPSSTSFLS and EEKK…EANQ. Residues 1652–1690 are compositionally biased toward polar residues; that stretch reads AVLSSKPSSTSASQGAKAESNSNPISLPTPQNTPKEANQ. Coiled coils occupy residues 1736 to 1760 and 1840 to 2077; these read VVSLAEAQQELQMLQKQLGESASTV and GADL…QQLE. Disordered stretches follow at residues 2081 to 2103 and 2127 to 2156; these read GKASLSPSSINQNFPASTDPGNK and VFPSSASSTPGSETPIINRANGLGLDTSPV. A compositionally biased stretch (polar residues) spans 2085 to 2103; that stretch reads LSPSSINQNFPASTDPGNK. Residues 2273–2312 adopt a coiled-coil conformation; that stretch reads ESTERELLELRTKVSKQERLLQSTTEHLKNANQQKESMEQ.

Interacts with PDE4D. Isoform 13 interacts with MAPRE1 and MAPRE3. Isoform 13 forms a pericentrosomal complex with AKAP9, CDK5RAP2 and EB1/MAPRE1; within this complex, may mediate MAPRE1-binding to CDK5RAP2. Interaction of isoform 13 with AKAP9 stabilizes both proteins. Isoform 13 interacts (via N-terminus) with CAMSAP2; this interaction is much stronger in the presence of AKAP9. In complex with AKAP9, Isoform 13 recruits CAMSAP2 to the Golgi apparatus. Isoform 13 interacts with unglycosylated LGALS3BP; this interaction may connect the pericentrosomal complex to the gamma-tubulin ring complex (gamma-TuRC) to promote microtubule assembly and acetylation. Highly expressed in adult and fetal heart, in skeletal muscle and, to a lower extent, in brain and placenta.

The protein resides in the golgi apparatus. It is found in the cytoplasm. Its subcellular location is the cytoskeleton. The protein localises to the microtubule organizing center. It localises to the centrosome. Functions as an anchor sequestering components of the cAMP-dependent pathway to Golgi and/or centrosomes. Its function is as follows. Participates in microtubule dynamics, promoting microtubule assembly. Depending upon the cell context, may act at the level of the Golgi apparatus or that of the centrosome. In complex with AKAP9, recruits CAMSAP2 to the Golgi apparatus and tethers non-centrosomal minus-end microtubules to the Golgi, an important step for polarized cell movement. In complex with AKAP9, EB1/MAPRE1 and CDK5RAP2, contributes to microtubules nucleation and extension from the centrosome to the cell periphery, a crucial process for directed cell migration, mitotic spindle orientation and cell-cycle progression. This chain is Myomegalin (PDE4DIP), found in Homo sapiens (Human).